Here is a 305-residue protein sequence, read N- to C-terminus: Ribosomal RNA large subunit methyltransferase F (305 aa).

Belongs to the methyltransferase superfamily. METTL16/RlmF family.

It localises to the cytoplasm. It carries out the reaction adenosine(1618) in 23S rRNA + S-adenosyl-L-methionine = N(6)-methyladenosine(1618) in 23S rRNA + S-adenosyl-L-homocysteine + H(+). In terms of biological role, specifically methylates the adenine in position 1618 of 23S rRNA. This chain is Ribosomal RNA large subunit methyltransferase F, found in Enterobacter sp. (strain 638).